The primary structure comprises 249 residues: Probable endopeptidase YafL (249 aa).

Positions 1–17 (MSLPSIPSFVLSGLLLI) are cleaved as a signal peptide. Cys18 is lipidated: N-palmitoyl cysteine. The S-diacylglycerol cysteine moiety is linked to residue Cys18. The NlpC/P60 domain maps to 116 to 243 (HNITEVAIHR…DHFLGARRIL (128 aa)). Cys147 (nucleophile) is an active-site residue. His202 functions as the Proton acceptor in the catalytic mechanism. Glu214 is a catalytic residue.

This sequence belongs to the peptidase C40 family.

It is found in the cell membrane. This Escherichia coli (strain K12) protein is Probable endopeptidase YafL (yafL).